We begin with the raw amino-acid sequence, 344 residues long: Putative 2-hydroxyacid dehydrogenase YoaD (344 aa).

Aspartate 193 is a binding site for NAD(+). Residue arginine 251 is part of the active site. Aspartate 275 serves as a coordination point for NAD(+). Glutamate 280 is an active-site residue. Histidine 300 acts as the Proton donor in catalysis.

It belongs to the D-isomer specific 2-hydroxyacid dehydrogenase family.

The polypeptide is Putative 2-hydroxyacid dehydrogenase YoaD (yoaD) (Bacillus subtilis (strain 168)).